A 226-amino-acid polypeptide reads, in one-letter code: Calcium-binding protein 1 (226 aa).

Residue Gly-2 is the site of N-myristoyl glycine attachment. Residue Cys-4 is the site of S-palmitoyl cysteine attachment. 4 EF-hand domains span residues Glu-81 to Met-116, Gly-135 to Ala-152, Ile-158 to His-193, and Val-195 to Arg-226. Residues Asp-94, Asp-96, Asp-98, Tyr-100, and Asp-105 each coordinate Ca(2+). Ca(2+)-binding residues include Asp-171, Asn-173, Asp-175, and Glu-177. Ser-179 bears the Phosphoserine mark. Positions 182, 208, 210, 212, 214, and 219 each coordinate Ca(2+).

As to quaternary structure, homodimer. Interacts (via C-terminus) with ITPR1, ITPR2 and ITPR3. This binding is calcium dependent and the interaction correlates with calcium concentration. An additional calcium-independent interaction with the N-terminus of ITPR1 results in a decreased InsP(3) binding to the receptor. Interacts with CACNA1A (via C-terminal CDB motif) in the pre- and postsynaptic membranes. Interacts with CACNA1C (via C-terminal C and IQ motifs). Interacts with CACNA1D. The binding to the C motif is calcium independent whereas the binding to IQ requires the presence of calcium and is mutually exclusive with calmodulin binding. Interacts with TRPC5 (via C-terminus). Interacts (via EF-hands 1 and 2) at microtubules with MAP1LC3B. Interacts with MYO1C. Interacts (via EF-hands 1 and 2) with NSMF (via the central NLS-containing motif region), the interaction occurs in a calcium dependent manner after synaptic NMDA receptor stimulation and prevents nuclear import of NSMF. Interacts with SPACA9. Phosphorylated. The phosphorylation regulates the activity.

It localises to the cytoplasm. The protein localises to the cytoskeleton. Its subcellular location is the perinuclear region. The protein resides in the cell membrane. It is found in the golgi apparatus. It localises to the postsynaptic density. In terms of biological role, modulates calcium-dependent activity of inositol 1,4,5-triphosphate receptors (ITPRs). Inhibits agonist-induced intracellular calcium signaling. Enhances inactivation and does not support calcium-dependent facilitation of voltage-dependent P/Q-type calcium channels. Causes calcium-dependent facilitation and inhibits inactivation of L-type calcium channels by binding to the same sites as calmodulin in the C-terminal domain of CACNA1C, but has an opposite effect on channel function. Suppresses the calcium-dependent inactivation of CACNA1D. Inhibits TRPC5 channels. Prevents NMDA receptor-induced cellular degeneration. Required for the normal transfer of light signals through the retina. The sequence is that of Calcium-binding protein 1 (CABP1) from Bos taurus (Bovine).